A 959-amino-acid polypeptide reads, in one-letter code: Nucleoporin NUP100/NSP100 (959 aa).

The tract at residues 1–104 is disordered; it reads MFGNNRPMFG…NSSNASNGNT (104 aa). FG repeat units lie at residues 2-3, 9-10, and glycine 17; these read FG. The segment covering 12–36 has biased composition (polar residues); sequence SNLSFGSNTSSFGGQQSQQPNSLFG. The SLFG 1; approximate repeat unit spans residues 21–24; that stretch reads SSFG. Residues 33 to 36 form an SLFG 2 repeat; it reads SLFG. A compositionally biased stretch (low complexity) spans 37–48; the sequence is NSNNNNNSTSNN. The SLFG 3; approximate repeat unit spans residues 51–54; it reads SGFG. Low complexity-rich tracts occupy residues 56 to 81 and 92 to 104; these read FTSAAGSNSNSLFGNNNTQNNGAFGQ and GSLNSSNASNGNT. The SLFG 4 repeat unit spans residues 66 to 69; the sequence is SLFG. Residues 77–80 form a GLFG 1; approximate repeat; sequence GAFG. The stretch at 89 to 92 is one SLFG 5; approximate repeat; the sequence is SPFG. The FG 4 repeat unit spans residues 105–106; it reads FG. A GLFG 2; approximate repeat occupies 112–115; it reads GSFG. Over residues 121–136 the composition is skewed to low complexity; the sequence is AFNNNSNSTNSPFGFN. Positions 121 to 172 are disordered; the sequence is AFNNNSNSTNSPFGFNKPNTGGTLFGSQNNNSAGTSSLFGGQSTSTTGTFGN. Residues 131-134 form an SLFG 6; approximate repeat; sequence SPFG. Over residues 137–153 the composition is skewed to polar residues; it reads KPNTGGTLFGSQNNNSA. One copy of the FG 5 repeat lies at 145–146; sequence FG. Residues 154–172 are compositionally biased toward low complexity; it reads GTSSLFGGQSTSTTGTFGN. Residues 157-160 form an SLFG 7 repeat; the sequence is SLFG. A GLFG 3; approximate repeat occupies 168-171; that stretch reads GTFG. Residues 175-178 form an SLFG 8; approximate repeat; sequence SSFG. One copy of the FG 6 repeat lies at 189–190; it reads FG. The disordered stretch occupies residues 190 to 394; the sequence is GAGNNSQSNT…NNQQQQSTGL (205 aa). The span at 192-245 shows a compositional bias: polar residues; that stretch reads GNNSQSNTTGSLFGNQQSSAFGTNNQQGSLFGQQSQNTNNAFGNQNQLGGSSFG. Residues 202–205 form an SLFG 9 repeat; the sequence is SLFG. An SLFG 10; approximate repeat occupies 210 to 213; it reads SAFG. The stretch at 220–223 is one SLFG 11 repeat; it reads SLFG. The stretch at 233–234 is one FG 7 repeat; it reads FG. The stretch at 242–245 is one SLFG 12; approximate repeat; that stretch reads SSFG. The SLFG 13 repeat unit spans residues 253–256; it reads SLFG. A compositionally biased stretch (low complexity) spans 259-293; the sequence is NNTLGNTTNNRNGLFGQMNSSNQGSSNSGLFGQNS. GLFG repeat units lie at residues 271–274 and 287–290; these read GLFG. The span at 294–303 shows a compositional bias: polar residues; sequence MNSSTQGVFG. A GLFG 6; approximate repeat occupies 300-303; that stretch reads GVFG. Over residues 304-317 the composition is skewed to low complexity; it reads QNNNQMQINGNNNN. The stretch at 318 to 321 is one SLFG 14 repeat; it reads SLFG. GLFG repeat units lie at residues 333–336, 345–348, 358–361, 379–382, and 393–396; these read GLFG. Residues 336-352 show a composition bias toward low complexity; it reads GQNNQQQGSGLFGQNSQ. The span at 353-377 shows a compositional bias: polar residues; it reads TSGSSGLFGQNNQKQPNTFTQSNTG. 3 SLFG repeats span residues 405-408, 417-420, and 436-439; these read SLFG. One copy of the FG 8 repeat lies at 448-449; sequence FG. Residues 462–465 form an SLFG 18 repeat; the sequence is SLFG. The SLFG 19; approximate repeat unit spans residues 474 to 477; that stretch reads SLFG. 3 GLFG repeats span residues 490-493, 506-509, and 523-526; these read GLFG. Residues 542–543 form an FG 9 repeat; the sequence is FG. The GLFG 15 repeat unit spans residues 550-553; the sequence is GLFG. An FG 10 repeat occupies 569-570; sequence FG. Disordered stretches follow at residues 672–697 and 745–794; these read TLERSDRGSSTSNSITDPESSYLNSN and DDQA…PMIE. The span at 679–697 shows a compositional bias: polar residues; the sequence is GSSTSNSITDPESSYLNSN. Residues 757–775 are compositionally biased toward basic and acidic residues; the sequence is LTEKAHSPQTDLKDDHDES. Phosphoserine is present on residues serine 763 and serine 783. Over residues 777–790 the composition is skewed to polar residues; the sequence is PDPQSKSPNGSTSI. Residues 814 to 956 form the Peptidase S59 domain; the sequence is KNNYYISPSI…GTYSYTIDHP (143 aa). Positions 816–955 are nucleoporin RNA-binding motif (NRM); that stretch reads NYYISPSIET…TGTYSYTIDH (140 aa).

Belongs to the nucleoporin GLFG family. Component of the nuclear pore complex (NPC). NPC constitutes the exclusive means of nucleocytoplasmic transport. NPCs allow the passive diffusion of ions and small molecules and the active, nuclear transport receptor-mediated bidirectional transport of macromolecules such as proteins, RNAs, ribonucleoparticles (RNPs), and ribosomal subunits across the nuclear envelope. Due to its 8-fold rotational symmetry, all subunits are present with 8 copies or multiples thereof. Through its FG repeats NUP100 interacts with numerous karyopherins including KAP95, and MEX67.

It is found in the nucleus. Its subcellular location is the nuclear pore complex. The protein resides in the nucleus membrane. Its function is as follows. Functions as a component of the nuclear pore complex (NPC). NPC components, collectively referred to as nucleoporins (NUPs), can play the role of both NPC structural components and of docking or interaction partners for transiently associated nuclear transport factors. Active directional transport is assured by both, a Phe-Gly (FG) repeat affinity gradient for these transport factors across the NPC and a transport cofactor concentration gradient across the nuclear envelope (GSP1 and GSP2 GTPases associated predominantly with GTP in the nucleus, with GDP in the cytoplasm). NUP100 plays an important role in several nuclear export and import pathways including poly(A)+ RNA and protein transport. The protein is Nucleoporin NUP100/NSP100 (NUP100) of Saccharomyces cerevisiae (strain ATCC 204508 / S288c) (Baker's yeast).